We begin with the raw amino-acid sequence, 386 residues long: Protein DOM34 (386 aa).

It belongs to the eukaryotic release factor 1 family. Pelota subfamily. Monomer. Component of the Dom34-Hbs1 complex, also named Pelota-HBS1L complex, composed of DOM34 and HBS1. The cofactor is a divalent metal cation.

The protein localises to the cytoplasm. Component of the Dom34-Hbs1 complex, a complex that recognizes stalled ribosomes and triggers the No-Go Decay (NGD) pathway. In the Dom34-Hbs1 complex, DOM34 recognizes ribosomes stalled at the 3' end of an mRNA and engages stalled ribosomes by destabilizing mRNA in the mRNA channel. Following ribosome-binding, the Dom34-Hbs1 complex promotes the disassembly of stalled ribosomes, followed by degradation of damaged mRNAs as part of the NGD pathway. The Dom34-Hbs1 complex is also involved in non-functional rRNA decay. This chain is Protein DOM34, found in Saccharomyces cerevisiae (strain ATCC 204508 / S288c) (Baker's yeast).